A 332-amino-acid polypeptide reads, in one-letter code: Alpha/beta hydrolase domain-containing protein aho-3 (332 aa).

The span at 1 to 15 (MSSGAPSGSSMSSTP) shows a compositional bias: low complexity. The disordered stretch occupies residues 1–24 (MSSGAPSGSSMSSTPGSPPPRAGG). Residues Ser191, Asp256, and His285 each act as charge relay system in the active site.

Belongs to the AB hydrolase superfamily. ABHD17 family. Palmitoylated on cysteine residues located in a cysteine cluster at the N-terminus which promotes membrane localization and localization to sensory neuron endings. In terms of tissue distribution, expressed in a subset of neurons including AIY, HSN, ADF, AFD, AWC, AWB and NSM, hypodermis, pharyngeal muscle and intestine.

The protein localises to the cell membrane. It is found in the cytoplasmic vesicle membrane. The enzyme catalyses S-hexadecanoyl-L-cysteinyl-[protein] + H2O = L-cysteinyl-[protein] + hexadecanoate + H(+). Its function is as follows. Hydrolyzes fatty acids from S-acylated cysteine residues in proteins. Acts in sensory neurons including AWC to regulate starvation-induced thermotaxis plasticity and salt learning behavior. The protein is Alpha/beta hydrolase domain-containing protein aho-3 of Caenorhabditis elegans.